Here is a 446-residue protein sequence, read N- to C-terminus: Kynurenine 3-monooxygenase (446 aa).

Belongs to the aromatic-ring hydroxylase family. KMO subfamily. FAD serves as cofactor.

The catalysed reaction is L-kynurenine + NADPH + O2 + H(+) = 3-hydroxy-L-kynurenine + NADP(+) + H2O. Its pathway is cofactor biosynthesis; NAD(+) biosynthesis; quinolinate from L-kynurenine: step 1/3. In terms of biological role, catalyzes the hydroxylation of L-kynurenine (L-Kyn) to form 3-hydroxy-L-kynurenine (L-3OHKyn). Required for synthesis of quinolinic acid. This is Kynurenine 3-monooxygenase from Flavobacterium johnsoniae (strain ATCC 17061 / DSM 2064 / JCM 8514 / BCRC 14874 / CCUG 350202 / NBRC 14942 / NCIMB 11054 / UW101) (Cytophaga johnsonae).